The following is a 555-amino-acid chain: DNA-directed primase/polymerase protein (555 aa).

Residues 1 to 22 (MKRKWEATLKQIEERASHYERK) adopt a coiled-coil conformation. Residues Arg-76, 114–116 (DLE), and 165–169 (KFSRH) each bind substrate. Mn(2+) is bound by residues Asp-114 and Glu-116. Positions 210-230 (ETTGHEFTHFSETPSEQGTCF) are disordered. The span at 219-230 (FSETPSEQGTCF) shows a compositional bias: polar residues. Ser-255 is subject to Phosphoserine. Substrate is bound by residues 288–291 (RNFR) and Lys-297. Zn(2+) contacts are provided by Cys-418, His-425, Cys-445, and Cys-450. Positions 418-451 (CENIGRAHRSNNIMILVDLKNEVWYQKCHDPVCK) match the Zinc knuckle motif motif. A disordered region spans residues 480–503 (TDTTADTETKSPHGPSSSVLSKGA). Residues 480 to 555 (TDTTADTETK…DELLIEVLQE (76 aa)) are interaction with RPA1. Short sequence motifs (RPA1-binding motif) lie at residues 509-523 (WDNG…EATE) and 543-551 (EIPDELLIE).

The protein belongs to the eukaryotic-type primase small subunit family. Interacts with RPA1; leading to recruitment to chromatin and stimulate DNA primase activity. Interacts with SSBP1. Interacts with POLDIP2; leading to enhance DNA polymerase activity. Mn(2+) is required as a cofactor.

It is found in the nucleus. The protein resides in the mitochondrion matrix. It localises to the chromosome. It catalyses the reaction ssDNA + n NTP = ssDNA/pppN(pN)n-1 hybrid + (n-1) diphosphate.. The catalysed reaction is DNA(n) + a 2'-deoxyribonucleoside 5'-triphosphate = DNA(n+1) + diphosphate. Its function is as follows. DNA primase and DNA polymerase required to tolerate replication-stalling lesions by bypassing them. Required to facilitate mitochondrial and nuclear replication fork progression by initiating de novo DNA synthesis using dNTPs and acting as an error-prone DNA polymerase able to bypass certain DNA lesions. Shows a high capacity to tolerate DNA damage lesions such as 8oxoG and abasic sites in DNA. Provides different translesion synthesis alternatives when DNA replication is stalled: able to synthesize DNA primers downstream of lesions, such as ultraviolet (UV) lesions, R-loops and G-quadruplexes, to allow DNA replication to continue. Can also realign primers ahead of 'unreadable lesions' such as abasic sites and 6-4 photoproduct (6-4 pyrimidine-pyrimidinone), thereby skipping the lesion. Repriming avoids fork degradation while leading to accumulation of internal ssDNA gaps behind the forks. Also able to incorporate nucleotides opposite DNA lesions such as 8oxoG, like a regular translesion synthesis DNA polymerase. Also required for reinitiating stalled forks after UV damage during nuclear DNA replication. Required for mitochondrial DNA (mtDNA) synthesis and replication, by reinitiating synthesis after UV damage or in the presence of chain-terminating nucleotides. Prevents APOBEC family-mediated DNA mutagenesis by repriming downstream of abasic site to prohibit error-prone translesion synthesis. Has non-overlapping function with POLH. In addition to its role in DNA damage response, also required to maintain efficient nuclear and mitochondrial DNA replication in unperturbed cells. In Bos taurus (Bovine), this protein is DNA-directed primase/polymerase protein.